The chain runs to 308 residues: Transcription initiation factor IIB (308 aa).

A run of 2 repeats spans residues 124-207 and 218-299.

It belongs to the TFIIB family.

In terms of biological role, stabilizes TBP binding to an archaeal box-A promoter. Also responsible for recruiting RNA polymerase II to the pre-initiation complex (DNA-TBP-TFIIB). This is Transcription initiation factor IIB from Sulfurisphaera tokodaii (strain DSM 16993 / JCM 10545 / NBRC 100140 / 7) (Sulfolobus tokodaii).